Here is a 548-residue protein sequence, read N- to C-terminus: Natural resistance-associated macrophage protein 1 (548 aa).

The segment at 1–38 (MSGDTGPPKQGGTRYGSISSPPSPEPQQAPPGGTYLSE) is disordered. At 1 to 55 (MSGDTGPPKQGGTRYGSISSPPSPEPQQAPPGGTYLSEKIPIPDTESGTFSLRKL) the chain is on the cytoplasmic side. Residues 56-73 (WAFTGPGFLMSIAFLDPG) traverse the membrane as a helical segment. Over 74 to 82 (NIESDLQAG) the chain is Extracellular. A helical transmembrane segment spans residues 83-102 (AVAGFKLLWVLLWATVLGLL). The Cytoplasmic portion of the chain corresponds to 103–139 (CQRLAARLGVVTGKDLGEVCHLYYPKVPRILLWLTIE). Residues 140-160 (LAIVGSDMQEVIGTAIAFSLL) form a helical membrane-spanning segment. The Extracellular segment spans residues 161–164 (SAGR). Residues 165 to 184 (IPLWGGVLITVVDTFFFLFL) form a helical membrane-spanning segment. Topologically, residues 185–193 (DNYGLRKLE) are cytoplasmic. A helical transmembrane segment spans residues 194 to 214 (AFFGFLITIMALTFGYEYVVA). Topologically, residues 215–237 (QPAQGALLQGLFLPSCPGCGQPE) are extracellular. Residues 238 to 256 (LLQAVGIIGAIIMPHNIYL) form a helical membrane-spanning segment. Topologically, residues 257-284 (HSSLVKSREVDRSRRADIREANMYFLIE) are cytoplasmic. A helical membrane pass occupies residues 285-304 (ATIALSVSFLINLFVMAVFG). At 305-346 (QAFYKQTNQAAFNICADSSLHDYAPIFPRNNLTVAVDIYQGG) the chain is on the extracellular side. N-linked (GlcNAc...) asparagine glycosylation is present at asparagine 335. The helical transmembrane segment at 347–366 (VILGCLFGPPALYIWAVGLL) threads the bilayer. At 367-397 (AAGQSSTMTGTYAGQFVMEGFLKLRWSRFAR) the chain is on the cytoplasmic side. The chain crosses the membrane as a helical span at residues 398–415 (VLLTRSCAILPTVLLAVF). Topologically, residues 416 to 426 (RDLRDLSGLND) are extracellular. Residues 427 to 447 (LLNVLQSLLLPFAVLPILTFT) traverse the membrane as a helical segment. At 448-463 (SMPALMQEFANGLVSK) the chain is on the cytoplasmic side. A helical transmembrane segment spans residues 464–485 (VITSSIMVLVCAVNLYFVISYL). Residues 486–493 (PSLPHPAY) lie on the Extracellular side of the membrane. Residues 494-513 (FSLVALLAAAYLGLTTYLVW) form a helical membrane-spanning segment. Residues 514-548 (TCLITQGATLLAHSSHQRFLYGLPEEDQEKGRTSG) are Cytoplasmic-facing.

This sequence belongs to the NRAMP family.

The protein localises to the late endosome membrane. Its subcellular location is the lysosome membrane. The enzyme catalyses Zn(2+)(in) + H(+)(out) = Zn(2+)(out) + H(+)(in). The catalysed reaction is Fe(2+)(in) + H(+)(out) = Fe(2+)(out) + H(+)(in). It carries out the reaction Mn(2+)(in) + H(+)(out) = Mn(2+)(out) + H(+)(in). Its function is as follows. Macrophage-specific antiporter that fluxes metal ions in either direction against a proton gradient. Localized to late endosomal lysosomal membranes, delivers bivalent cations from the cytosol into these acidic compartments where they may directly affect antimicrobial activity. Involved in iron metabolism and host natural resistance to infection with intracellular parasites. Pathogen resistance involves sequestration of Fe(2+) and Mn(2+), cofactors of both prokaryotic and eukaryotic catalases and superoxide dismutases, not only to protect the macrophage against its own generation of reactive oxygen species, but to deny the cations to the pathogen for synthesis of its protective enzymes. The polypeptide is Natural resistance-associated macrophage protein 1 (SLC11A1) (Bos taurus (Bovine)).